Reading from the N-terminus, the 94-residue chain is Small ribosomal subunit protein uS19 (94 aa).

The protein belongs to the universal ribosomal protein uS19 family.

Its function is as follows. Protein S19 forms a complex with S13 that binds strongly to the 16S ribosomal RNA. In Dictyoglomus turgidum (strain DSM 6724 / Z-1310), this protein is Small ribosomal subunit protein uS19.